The chain runs to 392 residues: p21-activated protein kinase-interacting protein 1 (392 aa).

5 WD repeats span residues 40-77 (AHTASLSAVAVNSRFVVTGSKDETIHIYDMKKKVDHGA), 80-118 (HHNGTITCLKFHGNRHLISGAEDGLICVWDARRWECLKS), 121-160 (AHKGHVTFLSIHPSGRLALSVGTDKTLRTWNLVEGRSAFI), 202-240 (TNERRVSSVTFLSESVLTVAGDEEVVRFFDCDSLTCLSE), and 243-284 (AHEN…KVSP). The tract at residues 309 to 392 (TKESPPAAAE…RKKKKIRMMQ (84 aa)) is disordered. Residues 325–351 (EQSRRNKEESGHAVQEEEKQPKPDTEK) are compositionally biased toward basic and acidic residues. The segment covering 355–368 (TGDSNKPTRGNSLV) has biased composition (polar residues). Basic residues predominate over residues 381 to 392 (KKRKKKKIRMMQ).

As to quaternary structure, interacts with PAK1.

It is found in the nucleus. It localises to the nucleolus. Negatively regulates the PAK1 kinase. PAK1 is a member of the PAK kinase family, which has been shown to play a positive role in the regulation of signaling pathways involving MAPK8 and RELA. PAK1 exists as an inactive homodimer, which is activated by binding of small GTPases such as CDC42 to an N-terminal regulatory domain. PAK1IP1 also binds to the N-terminus of PAK1, and inhibits the specific activation of PAK1 by CDC42. May be involved in ribosomal large subunit assembly. This chain is p21-activated protein kinase-interacting protein 1 (PAK1IP1), found in Bos taurus (Bovine).